Here is an 89-residue protein sequence, read N- to C-terminus: Acylphosphatase (89 aa).

The region spanning 4-89 (SYIAHISGRV…WQEHHFFSIG (86 aa)) is the Acylphosphatase-like domain. Residues Arg19 and Asn37 contribute to the active site.

Belongs to the acylphosphatase family.

It carries out the reaction an acyl phosphate + H2O = a carboxylate + phosphate + H(+). This is Acylphosphatase (acyP) from Colwellia psychrerythraea (strain 34H / ATCC BAA-681) (Vibrio psychroerythus).